We begin with the raw amino-acid sequence, 190 residues long: MADKEKDAVIVDETEHVDVDSKESKKEKKTKQQQKIEFLEAEVKELNDKYLRTLAEAENFKKRIQAEKIMDRKYAASSFATELLVPYEQFSKIVDFPSDNELLNNFLIGFKMIRDQFKSVLENEGVVEIKALGEVFDAKVHHAIEKESNKDKPNGTVLEVLQNGYLFKDRILRPAMVKINEWSEDNGEDK.

Residues 1-26 show a composition bias toward basic and acidic residues; that stretch reads MADKEKDAVIVDETEHVDVDSKESKK. Residues 1 to 31 are disordered; that stretch reads MADKEKDAVIVDETEHVDVDSKESKKEKKTK.

This sequence belongs to the GrpE family. As to quaternary structure, homodimer.

It is found in the cytoplasm. Its function is as follows. Participates actively in the response to hyperosmotic and heat shock by preventing the aggregation of stress-denatured proteins, in association with DnaK and GrpE. It is the nucleotide exchange factor for DnaK and may function as a thermosensor. Unfolded proteins bind initially to DnaJ; upon interaction with the DnaJ-bound protein, DnaK hydrolyzes its bound ATP, resulting in the formation of a stable complex. GrpE releases ADP from DnaK; ATP binding to DnaK triggers the release of the substrate protein, thus completing the reaction cycle. Several rounds of ATP-dependent interactions between DnaJ, DnaK and GrpE are required for fully efficient folding. The chain is Protein GrpE from Acholeplasma laidlawii (strain PG-8A).